Reading from the N-terminus, the 154-residue chain is MRLVHAVLLPGIIVFVSNGNLLHAHALHEDETGVTAGRQLRAAASEVFGLSRASFGLGKAQDPLDKFFSKIIFSGKPIETSYSAKGIHEKIIEAHDLHVSKSKNAPIQYASVMEYLKKTYPGPDIERIVSTLERHDEVGAKDLGAKLRDALDRQ.

The N-terminal stretch at 1-19 is a signal peptide; the sequence is MRLVHAVLLPGIIVFVSNG. The RxLR signature appears at 38 to 41; sequence RQLR. Positions 50–92 are leucine heptad repeat region; it reads LSRASFGLGKAQDPLDKFFSKIIFSGKPIETSYSAKGIHEKII. Residues 93–103 form a single repeat region region; sequence EAHDLHVSKSK. The interval 104-154 is highly variable C-terminus domain; it reads NAPIQYASVMEYLKKTYPGPDIERIVSTLERHDEVGAKDLGAKLRDALDRQ.

It belongs to the RxLR effector family.

The protein resides in the secreted. Its subcellular location is the host cytoplasm. Its function is as follows. Secreted effector that acts as an elicitor of hypersensitive response (HR) specifically on plants carrying defense protein RPP13. Recognition of ATR13 by RPP13 initiates defense responses that are effective against oomycete, bacterial and viral pathogens. The allele ATR13-Emco5 recognizes RPP13-Nd, the RPP13 defense protein from Arabidopsis thaliana ecotype Niederzenz. This is Avirulence protein ATR13 from Hyaloperonospora arabidopsidis (Peronospora arabidopsidis).